The chain runs to 276 residues: HUWE1-associated protein modifying stress responses 2 (276 aa).

Disordered stretches follow at residues 146-182 (GKVPPTPQPPRTPRMSPRPPAAASTQAAATESGTPVG), 204-238 (ISMRSGPPGSSSQDGGIASSGRWKSSFLENDPNSL), and 252-276 (VRKRTSAQFGDGSADSPLHKRNRMV). Pro residues predominate over residues 149-165 (PPTPQPPRTPRMSPRPP). Low complexity-rich tracts occupy residues 166-179 (AAASTQAAATESGT) and 208-219 (SGPPGSSSQDGG). Residues 252–276 (VRKRTSAQFGDGSADSPLHKRNRMV) form a nuclear localization signal region.

It belongs to the HAPSTR1 family. In terms of assembly, homooligomer. Heterooligomer with HAPSTR1; the interaction is direct and stabilizes HAPSTR1 independently of HUWE1. Interacts with HUWE1.

It localises to the nucleus. Its function is as follows. Together with HAPSTR1 plays a central regulatory role in the cellular response to molecular stressors, such as DNA damage, nutrient scarcity, and protein misfolding. Regulates these multiple stress response signaling pathways by stabilizing HAPSTR1, but also independently of HAPSTR1. This is HUWE1-associated protein modifying stress responses 2 from Mus musculus (Mouse).